The primary structure comprises 123 residues: MTYGIVIVSHSPEIASGLKKLIREVAKNISLTAIGGLENGEIGTSFDRVMNAIEENEADNLLTFFDLGSARMNLDLVSEMTDKELTIFNVPLIEGAYTASALLEAGATFEAIKEQLEKMLIEK.

The 122-residue stretch at 2–123 (TYGIVIVSHS…EQLEKMLIEK (122 aa)) folds into the PTS EIIA type-4 domain. The active-site Tele-phosphohistidine intermediate; for EIIA activity is the His10.

Homodimer. The dihydroxyacetone kinase complex is composed of a homodimer of DhaM, a homodimer of DhaK and the subunit DhaL.

The catalysed reaction is dihydroxyacetone + phosphoenolpyruvate = dihydroxyacetone phosphate + pyruvate. The protein operates within polyol metabolism; glycerol degradation. Its function is as follows. Component of the dihydroxyacetone kinase complex, which is responsible for the phosphoenolpyruvate (PEP)-dependent phosphorylation of dihydroxyacetone. DhaM serves as the phosphoryl donor. Is phosphorylated by phosphoenolpyruvate in an EI- and HPr-dependent reaction, and a phosphorelay system on histidine residues finally leads to phosphoryl transfer to DhaL and dihydroxyacetone. This Lactococcus lactis subsp. lactis (strain IL1403) (Streptococcus lactis) protein is PTS-dependent dihydroxyacetone kinase, phosphotransferase subunit DhaM.